The following is a 477-amino-acid chain: tRNA-2-methylthio-N(6)-dimethylallyladenosine synthase (477 aa).

The MTTase N-terminal domain occupies Gly-13–Ala-130. The [4Fe-4S] cluster site is built by Cys-22, Cys-59, Cys-93, Cys-178, Cys-182, and Cys-185. Residues Glu-164 to Ala-396 enclose the Radical SAM core domain. Residues Glu-399–Ala-462 form the TRAM domain.

It belongs to the methylthiotransferase family. MiaB subfamily. As to quaternary structure, monomer. Requires [4Fe-4S] cluster as cofactor.

Its subcellular location is the cytoplasm. It carries out the reaction N(6)-dimethylallyladenosine(37) in tRNA + (sulfur carrier)-SH + AH2 + 2 S-adenosyl-L-methionine = 2-methylsulfanyl-N(6)-dimethylallyladenosine(37) in tRNA + (sulfur carrier)-H + 5'-deoxyadenosine + L-methionine + A + S-adenosyl-L-homocysteine + 2 H(+). In terms of biological role, catalyzes the methylthiolation of N6-(dimethylallyl)adenosine (i(6)A), leading to the formation of 2-methylthio-N6-(dimethylallyl)adenosine (ms(2)i(6)A) at position 37 in tRNAs that read codons beginning with uridine. The chain is tRNA-2-methylthio-N(6)-dimethylallyladenosine synthase from Hydrogenovibrio crunogenus (strain DSM 25203 / XCL-2) (Thiomicrospira crunogena).